Reading from the N-terminus, the 506-residue chain is Histidine ammonia-lyase (506 aa).

The 5-imidazolinone (Ala-Gly) cross-link spans Ala144–Gly146. Ser145 bears the 2,3-didehydroalanine (Ser) mark.

The protein belongs to the PAL/histidase family. Post-translationally, contains an active site 4-methylidene-imidazol-5-one (MIO), which is formed autocatalytically by cyclization and dehydration of residues Ala-Ser-Gly.

It is found in the cytoplasm. The enzyme catalyses L-histidine = trans-urocanate + NH4(+). It participates in amino-acid degradation; L-histidine degradation into L-glutamate; N-formimidoyl-L-glutamate from L-histidine: step 1/3. The sequence is that of Histidine ammonia-lyase from Legionella pneumophila subsp. pneumophila (strain Philadelphia 1 / ATCC 33152 / DSM 7513).